The following is a 72-amino-acid chain: Translation initiation factor IF-1 (72 aa).

One can recognise an S1-like domain in the interval 1–72; the sequence is MSKQDVIEFD…TKGRITYRGK (72 aa).

This sequence belongs to the IF-1 family. As to quaternary structure, component of the 30S ribosomal translation pre-initiation complex which assembles on the 30S ribosome in the order IF-2 and IF-3, IF-1 and N-formylmethionyl-tRNA(fMet); mRNA recruitment can occur at any time during PIC assembly.

It localises to the cytoplasm. In terms of biological role, one of the essential components for the initiation of protein synthesis. Stabilizes the binding of IF-2 and IF-3 on the 30S subunit to which N-formylmethionyl-tRNA(fMet) subsequently binds. Helps modulate mRNA selection, yielding the 30S pre-initiation complex (PIC). Upon addition of the 50S ribosomal subunit IF-1, IF-2 and IF-3 are released leaving the mature 70S translation initiation complex. The chain is Translation initiation factor IF-1 from Hydrogenovibrio crunogenus (strain DSM 25203 / XCL-2) (Thiomicrospira crunogena).